The sequence spans 156 residues: Arginine repressor (156 aa).

It belongs to the ArgR family.

The protein localises to the cytoplasm. Its pathway is amino-acid biosynthesis; L-arginine biosynthesis [regulation]. Its function is as follows. Regulates arginine biosynthesis genes. The sequence is that of Arginine repressor from Vibrio atlanticus (strain LGP32) (Vibrio splendidus (strain Mel32)).